A 153-amino-acid chain; its full sequence is Histone H2B type W-T (153 aa).

Positions Met1–Cys54 are disordered. Positions Ser11–Gln36 are enriched in polar residues. Residues Ser37–Ser52 show a composition bias toward basic residues.

The protein belongs to the histone H2B family. In terms of assembly, can replace the conventional histone H2B in the nucleosome. The nucleosome is a histone octamer containing two molecules each of H2A, H2B, H3 and H4 assembled in one H3-H4 heterotetramer and two H2A-H2B heterodimers. The octamer wraps approximately 147 bp of DNA. In terms of tissue distribution, testis-specific (at protein level).

It localises to the nucleus membrane. The protein localises to the chromosome. Its subcellular location is the telomere. Atypical histone H2B that can form nucleosomes structurally and dynamically indistinguishable from those containing conventional H2B. Nucleosomes wrap and compact DNA into chromatin, limiting DNA accessibility to the cellular machineries which require DNA as a template. Histones thereby play a central role in transcription regulation, DNA repair, DNA replication and chromosomal stability. DNA accessibility is regulated via a complex set of post-translational modifications of histones, also called histone code, and nucleosome remodeling. However, unlike conventional H2B, does not recruit chromosome condensation factors and does not participate in the assembly of mitotic chromosomes. May be important for telomere function and play a role in spermatogenesis. The chain is Histone H2B type W-T from Homo sapiens (Human).